The chain runs to 352 residues: Ion-translocating oxidoreductase complex subunit D (352 aa).

Transmembrane regions (helical) follow at residues 20 to 40, 42 to 62, 69 to 91, and 123 to 143; these read IMLLVVIAALPGIAAQTWFFG, GTLFQIVLAAITALVAEAIVL, VASHLQDYSALLTGLLLAVSIPP, and PAMIGYVVLLISFPVQMTSWL. Threonine 187 bears the FMN phosphoryl threonine mark. Transmembrane regions (helical) follow at residues 215 to 235, 242 to 262, 267 to 287, 301 to 321, and 322 to 342; these read LAGVGWQWVNLAWLVGGVFLL, WHIPVSFLLTLALCAALGWLF, LASPQLHLLSGATMLGAFFIL, LIFGALAGVLVWLIRSFGGYP, and DGVAFAVLLANITVPLIDYYT.

It belongs to the NqrB/RnfD family. In terms of assembly, the complex is composed of six subunits: RsxA, RsxB, RsxC, RsxD, RsxE and RsxG. FMN is required as a cofactor.

The protein resides in the cell inner membrane. Its function is as follows. Part of a membrane-bound complex that couples electron transfer with translocation of ions across the membrane. Required to maintain the reduced state of SoxR. The protein is Ion-translocating oxidoreductase complex subunit D of Salmonella enteritidis PT4 (strain P125109).